The chain runs to 106 residues: COX assembly mitochondrial protein homolog (106 aa).

N-acetylalanine is present on alanine 2. In terms of domain architecture, CHCH spans 28 to 71; that stretch reads KERCSEQVQDFTKCCKNSGVLMVVKCRKENSALKECLTAYYNDP. Short sequence motifs (cx9C motif) lie at residues 31–41 and 53–63; these read CSEQVQDFTKC and CRKENSALKEC. 2 disulfide bridges follow: cysteine 31/cysteine 63 and cysteine 41/cysteine 53.

The protein belongs to the CMC family. In terms of assembly, component of the MITRAC (mitochondrial translation regulation assembly intermediate of cytochrome c oxidase complex) complex, the core components of this complex being COA3/MITRAC12 and COX14.

The protein resides in the mitochondrion. In terms of biological role, component of the MITRAC (mitochondrial translation regulation assembly intermediate of cytochrome c oxidase complex) complex, that regulates cytochrome c oxidase assembly. The polypeptide is COX assembly mitochondrial protein homolog (CMC1) (Homo sapiens (Human)).